Consider the following 707-residue polypeptide: Tubulin polyglutamylase ttll-11 (707 aa).

The TTL domain maps to 124–488 (RFTIDTSRAK…PLVRDTLLLV (365 aa)). Residues 279–282 (QEYV), Lys-293, and Asp-295 each bind ATP. The interval 675–707 (RNRSGTNGRKQNFTDDNNNPNSFAHLPKINERL) is disordered. The segment covering 677 to 696 (RSGTNGRKQNFTDDNNNPNS) has biased composition (polar residues).

This sequence belongs to the tubulin--tyrosine ligase family. Expressed in amphid sensory neurons. Weakly expressed in body wall muscles. Isoform a: Specifically expressed in ciliated sensory neurons in the head, including the IL1s, OLQ, head CEP, and amphid neurons. In the male tail, expressed in HOA, RnA, and phasmid neurons. Isoform b: Specifically expressed in male and hermaphrodite IL2 ciliated sensory neurons, and in male-specific CEM, HOB and RnB ciliated sensory neurons.

The protein resides in the cell projection. It is found in the axon. Its subcellular location is the perikaryon. The protein localises to the dendrite. It localises to the cilium. The protein resides in the extracellular vesicle. It catalyses the reaction L-glutamyl-[protein] + L-glutamate + ATP = gamma-L-glutamyl-L-glutamyl-[protein] + ADP + phosphate + H(+). In terms of biological role, polyglutamylase which preferentially modifies tubulin. Involved in the side-chain initiation step of the polyglutamylation reaction. By controlling tubulin glutamylation, regulates ciliary specialization and motor-based transport. Promotes the formation of A and B tubule singlets by splaying microtubule doublets in cilia. Together with ttll-4 and 5, required for male mating. Its function is as follows. Specifically promotes tubulin glutamylation in a subset of ciliated neurons including amphid, phasmid, CEP and RnA neurons. Functionally, specifically promotes tubulin glutamylation in male ciliated CEM, HOB and RnB neurons that release bioactive extracellular vesicles. Regulates the localization of TRP channel pdk-2 in male CEM, HOB and RnB neurons. Regulates the environmental release of bioactive extracellular vesicles in cilia. The chain is Tubulin polyglutamylase ttll-11 from Caenorhabditis elegans.